We begin with the raw amino-acid sequence, 242 residues long: Large ribosomal subunit protein uL1 (242 aa).

The protein belongs to the universal ribosomal protein uL1 family. Part of the 50S ribosomal subunit.

Its function is as follows. Binds directly to 23S rRNA. The L1 stalk is quite mobile in the ribosome, and is involved in E site tRNA release. Functionally, protein L1 is also a translational repressor protein, it controls the translation of the L11 operon by binding to its mRNA. This chain is Large ribosomal subunit protein uL1, found in Kitasatospora aureofaciens (Streptomyces aureofaciens).